Reading from the N-terminus, the 296-residue chain is Developmental pluripotency-associated protein 4 (296 aa).

Over residues 1–13 (METAGDKKWSAEE) the composition is skewed to basic and acidic residues. Positions 1–73 (METAGDKKWS…QTRRKVPIPP (73 aa)) are disordered. Residues 23–34 (SSQPSTAPAKAK) are compositionally biased toward low complexity. Over residues 42–58 (KSETDNGCKPKEGKPQD) the composition is skewed to basic and acidic residues.

In terms of assembly, interacts with DPPA2. Interacts with PCGF1. In terms of tissue distribution, expressed in pluripotent embryonic cells, but not in differentiated somatic tissues.

It is found in the nucleus. In terms of biological role, may be involved in the maintenance of active epigenetic status of target genes. May inhibit differentiation of embryonic stem (ES) cells into a primitive ectoderm lineage. The protein is Developmental pluripotency-associated protein 4 (Dppa4) of Mus musculus (Mouse).